We begin with the raw amino-acid sequence, 107 residues long: uncharacterized protein (107 aa).

The next 3 membrane-spanning stretches (helical) occupy residues 15–35 (TGSY…LGIS), 43–63 (LYRV…WLSY), and 87–107 (YFPS…IFCF).

It localises to the membrane. This is an uncharacterized protein from Saccharomyces cerevisiae (strain ATCC 204508 / S288c) (Baker's yeast).